A 519-amino-acid polypeptide reads, in one-letter code: Probable cytosol aminopeptidase (519 aa).

Positions 251 and 256 each coordinate Mn(2+). Lysine 263 is a catalytic residue. Mn(2+) is bound by residues aspartate 274, aspartate 333, and glutamate 335. The active site involves arginine 337. Low complexity predominate over residues 487-502; sequence VAPAAPAAPAAPAARP. Residues 487–519 are disordered; the sequence is VAPAAPAAPAAPAARPAAKRTGRSQGGLKRTAP.

It belongs to the peptidase M17 family. The cofactor is Mn(2+).

The protein localises to the cytoplasm. It carries out the reaction Release of an N-terminal amino acid, Xaa-|-Yaa-, in which Xaa is preferably Leu, but may be other amino acids including Pro although not Arg or Lys, and Yaa may be Pro. Amino acid amides and methyl esters are also readily hydrolyzed, but rates on arylamides are exceedingly low.. The catalysed reaction is Release of an N-terminal amino acid, preferentially leucine, but not glutamic or aspartic acids.. Presumably involved in the processing and regular turnover of intracellular proteins. Catalyzes the removal of unsubstituted N-terminal amino acids from various peptides. The protein is Probable cytosol aminopeptidase of Verminephrobacter eiseniae (strain EF01-2).